The primary structure comprises 70 residues: Translational regulator CsrA (70 aa).

The protein belongs to the CsrA/RsmA family. Homodimer; the beta-strands of each monomer intercalate to form a hydrophobic core, while the alpha-helices form wings that extend away from the core.

Its subcellular location is the cytoplasm. Functionally, a translational regulator that binds mRNA to regulate translation initiation and/or mRNA stability. Usually binds in the 5'-UTR at or near the Shine-Dalgarno sequence preventing ribosome-binding, thus repressing translation. Its main target seems to be the major flagellin gene, while its function is anatagonized by FliW. In Rhodopirellula baltica (strain DSM 10527 / NCIMB 13988 / SH1), this protein is Translational regulator CsrA.